A 424-amino-acid polypeptide reads, in one-letter code: Serine--tRNA ligase (424 aa).

An L-serine-binding site is contributed by 231 to 233 (TAE). 262-264 (RSE) serves as a coordination point for ATP. An L-serine-binding site is contributed by E285. Residue 349–352 (EISS) participates in ATP binding. S385 provides a ligand contact to L-serine.

Belongs to the class-II aminoacyl-tRNA synthetase family. Type-1 seryl-tRNA synthetase subfamily. Homodimer. The tRNA molecule binds across the dimer.

The protein resides in the cytoplasm. The enzyme catalyses tRNA(Ser) + L-serine + ATP = L-seryl-tRNA(Ser) + AMP + diphosphate + H(+). It carries out the reaction tRNA(Sec) + L-serine + ATP = L-seryl-tRNA(Sec) + AMP + diphosphate + H(+). Its pathway is aminoacyl-tRNA biosynthesis; selenocysteinyl-tRNA(Sec) biosynthesis; L-seryl-tRNA(Sec) from L-serine and tRNA(Sec): step 1/1. Functionally, catalyzes the attachment of serine to tRNA(Ser). Is also able to aminoacylate tRNA(Sec) with serine, to form the misacylated tRNA L-seryl-tRNA(Sec), which will be further converted into selenocysteinyl-tRNA(Sec). This chain is Serine--tRNA ligase, found in Bacillus cereus (strain AH187).